The primary structure comprises 209 residues: Large ribosomal subunit protein uL3 (209 aa).

The interval 113 to 155 (TSRGHGYQGNIKRHHQSRGPETHGSRYHRIPGSMGSIINRVPK) is disordered.

The protein belongs to the universal ribosomal protein uL3 family. Part of the 50S ribosomal subunit. Forms a cluster with proteins L14 and L19.

Functionally, one of the primary rRNA binding proteins, it binds directly near the 3'-end of the 23S rRNA, where it nucleates assembly of the 50S subunit. This is Large ribosomal subunit protein uL3 from Lactobacillus delbrueckii subsp. bulgaricus (strain ATCC 11842 / DSM 20081 / BCRC 10696 / JCM 1002 / NBRC 13953 / NCIMB 11778 / NCTC 12712 / WDCM 00102 / Lb 14).